The primary structure comprises 244 residues: MIIPAIDLIEGSVVRLYQGDYEQKTKYELDPIDVVNNYADQGAKWLHIVDLTGAKDTNKRQLKLIGDMVATGRMQFQAGGGIRSEQDVAQLLALGVKRVVIGSLAVKEPELVKGWVTKYGSEAIVLALDINIDEQGNKFIATHGWQENSGVSLEALLEDFLSVGAKHVLCTDISRDGTLQGANHQLYSEMAAKFPTIEWQASGGIGNLDDIAVLKPTHVSGVILGRALLEGKFTVEQAIECWQS.

Aspartate 7 (proton acceptor) is an active-site residue. The Proton donor role is filled by aspartate 129.

The protein belongs to the HisA/HisF family.

It is found in the cytoplasm. It catalyses the reaction 1-(5-phospho-beta-D-ribosyl)-5-[(5-phospho-beta-D-ribosylamino)methylideneamino]imidazole-4-carboxamide = 5-[(5-phospho-1-deoxy-D-ribulos-1-ylimino)methylamino]-1-(5-phospho-beta-D-ribosyl)imidazole-4-carboxamide. It participates in amino-acid biosynthesis; L-histidine biosynthesis; L-histidine from 5-phospho-alpha-D-ribose 1-diphosphate: step 4/9. The chain is 1-(5-phosphoribosyl)-5-[(5-phosphoribosylamino)methylideneamino] imidazole-4-carboxamide isomerase from Pseudoalteromonas atlantica (strain T6c / ATCC BAA-1087).